The primary structure comprises 439 residues: tRNA modification GTPase MnmE (439 aa).

(6S)-5-formyl-5,6,7,8-tetrahydrofolate is bound by residues Arg-24, Glu-81, and Lys-121. Residues 218 to 363 (GFKVVIAGAP…LRRLIGDIVE (146 aa)) enclose the TrmE-type G domain. Position 228 (Asn-228) interacts with K(+). Residues 228–233 (NAGKSS), 247–253 (TEIAGTT), and 272–275 (DTAG) contribute to the GTP site. Ser-232 provides a ligand contact to Mg(2+). K(+)-binding residues include Thr-247, Ile-249, and Thr-252. Thr-253 contributes to the Mg(2+) binding site. Residue Lys-439 coordinates (6S)-5-formyl-5,6,7,8-tetrahydrofolate.

This sequence belongs to the TRAFAC class TrmE-Era-EngA-EngB-Septin-like GTPase superfamily. TrmE GTPase family. In terms of assembly, homodimer. Heterotetramer of two MnmE and two MnmG subunits. The cofactor is K(+).

Its subcellular location is the cytoplasm. Its function is as follows. Exhibits a very high intrinsic GTPase hydrolysis rate. Involved in the addition of a carboxymethylaminomethyl (cmnm) group at the wobble position (U34) of certain tRNAs, forming tRNA-cmnm(5)s(2)U34. The chain is tRNA modification GTPase MnmE from Rhizobium johnstonii (strain DSM 114642 / LMG 32736 / 3841) (Rhizobium leguminosarum bv. viciae).